We begin with the raw amino-acid sequence, 41 residues long: MKIKNSLKALKGRHRDNRVVRRKGRIYILNKTNPRFRARQG.

This sequence belongs to the bacterial ribosomal protein bL36 family.

In Bartonella bacilliformis (strain ATCC 35685 / KC583 / Herrer 020/F12,63), this protein is Large ribosomal subunit protein bL36.